The sequence spans 473 residues: Putative malate dehydrogenase 1B (473 aa).

The protein belongs to the LDH/MDH superfamily. MDH type 2 family.

The protein is Putative malate dehydrogenase 1B (MDH1B) of Bos taurus (Bovine).